The sequence spans 191 residues: Signal peptidase IB (191 aa).

Topologically, residues Met-1–Glu-7 are cytoplasmic. The chain crosses the membrane as a helical span at residues Trp-8–Thr-28. Residues Pro-29–Asn-191 lie on the Extracellular side of the membrane. Active-site residues include Ser-36 and Lys-77.

This sequence belongs to the peptidase S26 family.

Its subcellular location is the cell membrane. The enzyme catalyses Cleavage of hydrophobic, N-terminal signal or leader sequences from secreted and periplasmic proteins.. Essential for cell viability. This Staphylococcus aureus (strain MRSA252) protein is Signal peptidase IB (spsB).